Reading from the N-terminus, the 249-residue chain is Chitooligosaccharide deacetylase (249 aa).

Mg(2+) contacts are provided by His61 and His125.

Belongs to the YdjC deacetylase family. ChbG subfamily. As to quaternary structure, homodimer. The cofactor is Mg(2+).

Its subcellular location is the cytoplasm. It catalyses the reaction N,N'-diacetylchitobiose + H2O = N-acetyl-beta-D-glucosaminyl-(1-&gt;4)-D-glucosamine + acetate. The catalysed reaction is diacetylchitobiose-6'-phosphate + H2O = N'-monoacetylchitobiose-6'-phosphate + acetate. The protein operates within glycan degradation; chitin degradation. Involved in the degradation of chitin. ChbG is essential for growth on the acetylated chitooligosaccharides chitobiose and chitotriose but is dispensable for growth on cellobiose and chitosan dimer, the deacetylated form of chitobiose. Deacetylation of chitobiose-6-P and chitotriose-6-P is necessary for both the activation of the chb promoter by the regulatory protein ChbR and the hydrolysis of phosphorylated beta-glucosides by the phospho-beta-glucosidase ChbF. Catalyzes the removal of only one acetyl group from chitobiose-6-P to yield monoacetylchitobiose-6-P, the inducer of ChbR and the substrate of ChbF. This is Chitooligosaccharide deacetylase from Escherichia coli O9:H4 (strain HS).